The sequence spans 405 residues: S-adenosylmethionine sensor upstream of mTORC1 (405 aa).

Residues methionine 1–glutamate 34 form a disordered region. The span at arginine 25–glutamate 34 shows a compositional bias: basic and acidic residues. S-adenosyl-L-methionine is bound by residues arginine 95, glycine 172, aspartate 190, aspartate 202, phenylalanine 203, and serine 244.

The protein belongs to the BMT2/SAMTOR family. Interacts with the DEPDC5 subunit of the GATOR1 complex; interaction is disrupted when SAMTOR binds S-adenosyl-L-methionine. Interacts with the KICSTOR complex; interaction is disrupted when SAMTOR binds S-adenosyl-L-methionine.

S-adenosyl-L-methionine-binding protein that acts as an inhibitor of mTORC1 signaling via interaction with the GATOR1 and KICSTOR complexes. Acts as a sensor of S-adenosyl-L-methionine to signal methionine sufficiency to mTORC1: in presence of methionine, binds S-adenosyl-L-methionine, leading to disrupt interaction with the GATOR1 and KICSTOR complexes and promote mTORC1 signaling. Upon methionine starvation, S-adenosyl-L-methionine levels are reduced, thereby promoting the association with GATOR1 and KICSTOR, leading to inhibit mTORC1 signaling. Probably also acts as a S-adenosyl-L-methionine-dependent methyltransferase (Potential). The protein is S-adenosylmethionine sensor upstream of mTORC1 of Homo sapiens (Human).